We begin with the raw amino-acid sequence, 260 residues long: MTDILNKILATKAQEVAAQKAAVNAEHIRTLAAEAAPVRSFIDSIRGKHRLNLPAVIAEIKKASPSKGLIRPDFRPAEIARAYENAGAACLSVLTDEPYFQGSPEYLKQAREAVSLPVLRKDFIIDEYQVYQARAWGADAVLLIAAALEQEQLERFEAVAHELGMTVLLELHDETELEKCRNLTTPLWGVNNRNLRTFEVSLDQTLSLLPALEGKTVVTESGITGKADVEFMQSRGVHTFLIGETFMRADDIEAEVGKLF.

The protein belongs to the TrpC family.

The catalysed reaction is 1-(2-carboxyphenylamino)-1-deoxy-D-ribulose 5-phosphate + H(+) = (1S,2R)-1-C-(indol-3-yl)glycerol 3-phosphate + CO2 + H2O. It participates in amino-acid biosynthesis; L-tryptophan biosynthesis; L-tryptophan from chorismate: step 4/5. The polypeptide is Indole-3-glycerol phosphate synthase (Neisseria meningitidis serogroup B (strain ATCC BAA-335 / MC58)).